The primary structure comprises 160 residues: Ribosomal RNA large subunit methyltransferase H (160 aa).

Residues Leu76 and Gly108 each coordinate S-adenosyl-L-methionine.

This sequence belongs to the RNA methyltransferase RlmH family. In terms of assembly, homodimer.

Its subcellular location is the cytoplasm. The enzyme catalyses pseudouridine(1915) in 23S rRNA + S-adenosyl-L-methionine = N(3)-methylpseudouridine(1915) in 23S rRNA + S-adenosyl-L-homocysteine + H(+). Its function is as follows. Specifically methylates the pseudouridine at position 1915 (m3Psi1915) in 23S rRNA. The sequence is that of Ribosomal RNA large subunit methyltransferase H from Rhodopseudomonas palustris (strain TIE-1).